Here is a 136-residue protein sequence, read N- to C-terminus: Histone H3 (136 aa).

The disordered stretch occupies residues 1-43 (MARTKQTARKSTGGKAPRKQLATKAARKSAPATGGVKKPHRYR). K5 is modified (N6-methylated lysine). K10 carries the post-translational modification N6-acetyllysine; alternate. Position 10 is an N6-methylated lysine; alternate (K10). S11 is modified (phosphoserine). 2 positions are modified to N6-acetyllysine: K15 and K24. An N6-methylated lysine mark is found at K28, K37, and K80.

The protein belongs to the histone H3 family. As to quaternary structure, the nucleosome is a histone octamer containing two molecules each of H2A, H2B, H3 and H4 assembled in one H3-H4 heterotetramer and two H2A-H2B heterodimers. The octamer wraps approximately 147 bp of DNA. Post-translationally, acetylation is generally linked to gene activation. Methylation at Lys-5 is linked to gene activation. Methylation at Lys-10 is linked to gene repression.

It is found in the nucleus. Its subcellular location is the chromosome. In terms of biological role, core component of nucleosome. Nucleosomes wrap and compact DNA into chromatin, limiting DNA accessibility to the cellular machineries which require DNA as a template. Histones thereby play a central role in transcription regulation, DNA repair, DNA replication and chromosomal stability. DNA accessibility is regulated via a complex set of post-translational modifications of histones, also called histone code, and nucleosome remodeling. The protein is Histone H3 of Platynereis dumerilii (Dumeril's clam worm).